Here is a 60-residue protein sequence, read N- to C-terminus: Homeobox protein engrailed-like B (60 aa).

The homeobox DNA-binding region spans 1–41 (VEQLQRLKSEFGASRYLTEARRQALAQELRLNEAQIKIWFQ).

The protein belongs to the engrailed homeobox family.

The protein localises to the nucleus. The sequence is that of Homeobox protein engrailed-like B from Myxine glutinosa (Atlantic hagfish).